The sequence spans 136 residues: S-protein homolog 6 (136 aa).

The signal sequence occupies residues 1 to 17 (MFIIIFIVLISLIGCET). 2 N-linked (GlcNAc...) asparagine glycosylation sites follow: Asn-76 and Asn-108.

The protein belongs to the plant self-incompatibility (S1) protein family.

The protein localises to the secreted. The sequence is that of S-protein homolog 6 from Arabidopsis thaliana (Mouse-ear cress).